We begin with the raw amino-acid sequence, 281 residues long: Pantothenate synthetase (281 aa).

Position 30–37 (M30–H37) interacts with ATP. H37 (proton donor) is an active-site residue. Q61 provides a ligand contact to (R)-pantoate. Residue Q61 coordinates beta-alanine. G147–D150 serves as a coordination point for ATP. Q153 is a (R)-pantoate binding site. ATP-binding positions include V176 and M184–R187.

The protein belongs to the pantothenate synthetase family. Homodimer.

It is found in the cytoplasm. It carries out the reaction (R)-pantoate + beta-alanine + ATP = (R)-pantothenate + AMP + diphosphate + H(+). It participates in cofactor biosynthesis; (R)-pantothenate biosynthesis; (R)-pantothenate from (R)-pantoate and beta-alanine: step 1/1. Functionally, catalyzes the condensation of pantoate with beta-alanine in an ATP-dependent reaction via a pantoyl-adenylate intermediate. The protein is Pantothenate synthetase of Oleidesulfovibrio alaskensis (strain ATCC BAA-1058 / DSM 17464 / G20) (Desulfovibrio alaskensis).